A 222-amino-acid chain; its full sequence is MSDDKLIPATPDADAYAKTADANAAEIFDRDEPFALFADWLTEAKKKEPNDANAMALATADASGLPDVRMVLLKDVDADGFVFYTNLESGKGGQLADNPQAALCFHWKSLRRQVRVRGAVEPVSAGEADAYFASRARDSRIGAWASKQSRPLESRFALEKSVAREAARFGLGEVPRPPHWSGFRIRPLSLEFWRDRPFRLHDRMFFDRPDLGSTWTVTRLYP.

FMN contacts are provided by residues 69 to 74 (RMVLLK), 84 to 85 (YT), lysine 91, and glutamine 113. Lysine 74 serves as a coordination point for substrate. The substrate site is built by tyrosine 131, arginine 135, and serine 139. Residues 148-149 (QS) and tryptophan 193 contribute to the FMN site. A substrate-binding site is contributed by 199–201 (RLH). FMN is bound at residue arginine 203.

This sequence belongs to the pyridoxamine 5'-phosphate oxidase family. In terms of assembly, homodimer. FMN serves as cofactor.

The enzyme catalyses pyridoxamine 5'-phosphate + O2 + H2O = pyridoxal 5'-phosphate + H2O2 + NH4(+). The catalysed reaction is pyridoxine 5'-phosphate + O2 = pyridoxal 5'-phosphate + H2O2. Its pathway is cofactor metabolism; pyridoxal 5'-phosphate salvage; pyridoxal 5'-phosphate from pyridoxamine 5'-phosphate: step 1/1. The protein operates within cofactor metabolism; pyridoxal 5'-phosphate salvage; pyridoxal 5'-phosphate from pyridoxine 5'-phosphate: step 1/1. Catalyzes the oxidation of either pyridoxine 5'-phosphate (PNP) or pyridoxamine 5'-phosphate (PMP) into pyridoxal 5'-phosphate (PLP). This Maricaulis maris (strain MCS10) (Caulobacter maris) protein is Pyridoxine/pyridoxamine 5'-phosphate oxidase.